The primary structure comprises 665 residues: Transketolase (665 aa).

Histidine 26 lines the substrate pocket. Thiamine diphosphate is bound by residues histidine 66 and 114-116 (GPL). The segment at 94 to 114 (NSKTPGHPETGETPGVETTTG) is disordered. Residues 97-114 (TPGHPETGETPGVETTTG) show a composition bias toward low complexity. Residue aspartate 155 coordinates Mg(2+). Thiamine diphosphate-binding residues include glycine 156 and asparagine 185. Residues asparagine 185 and isoleucine 187 each contribute to the Mg(2+) site. The substrate site is built by histidine 261, arginine 358, and serine 385. A thiamine diphosphate-binding site is contributed by histidine 261. Residue glutamate 411 is the Proton donor of the active site. Phenylalanine 437 contributes to the thiamine diphosphate binding site. 3 residues coordinate substrate: histidine 461, aspartate 469, and arginine 520.

The protein belongs to the transketolase family. As to quaternary structure, homodimer. Mg(2+) is required as a cofactor. Requires Ca(2+) as cofactor. It depends on Mn(2+) as a cofactor. Co(2+) serves as cofactor. The cofactor is thiamine diphosphate.

The enzyme catalyses D-sedoheptulose 7-phosphate + D-glyceraldehyde 3-phosphate = aldehydo-D-ribose 5-phosphate + D-xylulose 5-phosphate. Functionally, catalyzes the transfer of a two-carbon ketol group from a ketose donor to an aldose acceptor, via a covalent intermediate with the cofactor thiamine pyrophosphate. The sequence is that of Transketolase (tkt) from Buchnera aphidicola subsp. Acyrthosiphon pisum (strain APS) (Acyrthosiphon pisum symbiotic bacterium).